The primary structure comprises 230 residues: Large ribosomal subunit protein uL1 (230 aa).

This sequence belongs to the universal ribosomal protein uL1 family. As to quaternary structure, part of the 50S ribosomal subunit.

Its function is as follows. Binds directly to 23S rRNA. The L1 stalk is quite mobile in the ribosome, and is involved in E site tRNA release. Protein L1 is also a translational repressor protein, it controls the translation of the L11 operon by binding to its mRNA. In Chromohalobacter salexigens (strain ATCC BAA-138 / DSM 3043 / CIP 106854 / NCIMB 13768 / 1H11), this protein is Large ribosomal subunit protein uL1.